The primary structure comprises 285 residues: Iodotyrosine deiodinase 1 (285 aa).

Residues 1–21 (MFLLTPVLVAVVCILVIWVFK) traverse the membrane as a helical segment. Residues 96 to 100 (RRSIR) and 124 to 125 (SG) each bind FMN. Residues alanine 126, glutamate 153, tyrosine 157, and lysine 178 each contribute to the 3,5-diiodo-L-tyrosine site. Alanine 126, glutamate 153, tyrosine 157, and lysine 178 together coordinate 3-iodo-L-tyrosine. Residues 233-235 (TTT) and arginine 275 each bind FMN.

The protein belongs to the nitroreductase family. As to quaternary structure, homodimer. It depends on FMN as a cofactor.

Its subcellular location is the cell membrane. It is found in the cytoplasmic vesicle membrane. It catalyses the reaction 2 iodide + L-tyrosine + 2 NADP(+) = 3,5-diiodo-L-tyrosine + 2 NADPH + H(+). The enzyme catalyses iodide + L-tyrosine + NADP(+) = 3-iodo-L-tyrosine + NADPH. It carries out the reaction 3-iodo-L-tyrosine + iodide + NADP(+) = 3,5-diiodo-L-tyrosine + NADPH + H(+). The catalysed reaction is L-tyrosine + chloride + NADP(+) = 3-chloro-L-tyrosine + NADPH. It catalyses the reaction bromide + L-tyrosine + NADP(+) = 3-bromo-L-tyrosine + NADPH. Catalyzes the dehalogenation of halotyrosines such as 3-bromo-L-tyrosine, 3-chloro-L-tyrosine, 3-iodo-L-tyrosine and 3,5-diiodo-L-tyrosine. During thyroid hormone biosynthesis, facilitates iodide salvage by catalysing the oxidative NADPH-dependent deiodination of the halogenated by-products of thyroid hormone production, monoiodotyrosine (L-MIT) and diiodotyrosine (L-DIT). The scavanged iodide can then reenter the hormone-producing pathways. Acts more efficiently on 3-iodo-L-tyrosine than 3,5-diiodo-L-tyrosine. In Rattus norvegicus (Rat), this protein is Iodotyrosine deiodinase 1 (Iyd).